A 239-amino-acid chain; its full sequence is Lactate utilization protein A (239 aa).

The protein belongs to the LutA/YkgE family.

Its function is as follows. Is involved in L-lactate degradation and allows cells to grow with lactate as the sole carbon source. This is Lactate utilization protein A from Shouchella clausii (strain KSM-K16) (Alkalihalobacillus clausii).